The following is a 262-amino-acid chain: Triosephosphate isomerase (262 aa).

9–11 (NWK) is a binding site for substrate. His-99 serves as the catalytic Electrophile. Catalysis depends on Glu-171, which acts as the Proton acceptor. Substrate is bound by residues Gly-177 and Ser-216.

The protein belongs to the triosephosphate isomerase family. Homodimer.

The protein localises to the cytoplasm. It carries out the reaction D-glyceraldehyde 3-phosphate = dihydroxyacetone phosphate. It functions in the pathway carbohydrate biosynthesis; gluconeogenesis. The protein operates within carbohydrate degradation; glycolysis; D-glyceraldehyde 3-phosphate from glycerone phosphate: step 1/1. In terms of biological role, involved in the gluconeogenesis. Catalyzes stereospecifically the conversion of dihydroxyacetone phosphate (DHAP) to D-glyceraldehyde-3-phosphate (G3P). This is Triosephosphate isomerase from Blochmanniella floridana.